A 974-amino-acid polypeptide reads, in one-letter code: Leucine-rich repeat receptor-like kinase protein SUNN (974 aa).

An N-terminal signal peptide occupies residues 1–20; it reads MKNITCYLLLLCMLFTTCYS. 4 N-linked (GlcNAc...) asparagine glycosylation sites follow: N75, N104, N123, and N136. LRR repeat units follow at residues 92 to 116, 117 to 141, 143 to 165, 166 to 188, 189 to 213, 238 to 262, 263 to 286, 288 to 309, 310 to 334, 335 to 358, 360 to 382, 383 to 406, 407 to 430, 431 to 454, 456 to 477, 478 to 501, 503 to 525, 527 to 549, 550 to 573, and 574 to 598; these read LNMLESLTITMDNLTGELPTELSKL, TSLRILNISHNLFSGNFPGNITFGM, KLEALDAYDNNFEGPLPEEIVSL, MKLKYLSFAGNFFSGTIPESYSE, FQKLEILRLNYNSLTGKIPKSLSKL, IKSLRYLEISNANLTGEIPPSLGNL, ENLDSLFLQMNNLTGTIPPELSSM, SLMSLDLSINGLSGEIPETFSK, LKNLTLINFFQNKLRGSIPAFIGDL, PNLETLQVWENNFSFVLPQNLGSN, KFIYFDVTKNHLTGLIPPELCKS, KKLKTFIVTDNFFRGPIPNGIGPC, KSLEKIRVANNYLDGPVPPGIFQL, PSVQIIELGNNRFNGQLPTEISGN, LGNLALSNNLFTGRIPASMKNL, RSLQTLLLDANQFLGEIPAEVFAL, VLTRINISGNNLTGGIPKTVTQC, SLTAVDFSRNMLTGEVPKGMKNL, KVLSIFNVSHNSISGKIPDEIRFM, and TSLTTLDLSYNNFTGIVPTGGQFLV. N-linked (GlcNAc...) asparagine glycans are attached at residues N250 and N274. 2 N-linked (GlcNAc...) asparagine glycosylation sites follow: N312 and N346. Residues N508 and N513 are each glycosylated (N-linked (GlcNAc...) asparagine). N-linked (GlcNAc...) asparagine glycans are attached at residues N556 and N585. Residues 635–655 form a helical membrane-spanning segment; it reads VVIAIVFATAVLMVIVTLHMM. The region spanning 685-972 is the Protein kinase domain; the sequence is LKEENIIGKG…PPHSTSHNLI (288 aa). ATP is bound by residues 691–699 and K713; that span reads IGKGGAGIV. Residue D810 is the Proton acceptor of the active site.

This sequence belongs to the protein kinase superfamily. Ser/Thr protein kinase family. Expressed in roots and shoots. Expressed in the vasculature of leaves, petioles, stems and roots.

The protein resides in the cell membrane. It catalyses the reaction L-seryl-[protein] + ATP = O-phospho-L-seryl-[protein] + ADP + H(+). It carries out the reaction L-threonyl-[protein] + ATP = O-phospho-L-threonyl-[protein] + ADP + H(+). LRR receptor kinase involved in the regulation of root growth and root nodule organogenesis. Involved in long distance nodulation signaling events. Involved in the autoregulation of nodulation (AON), a long distance systemic signaling from root to shoot and back again, which allows legumes to limit the number of root nodules formed based on available nitrogen and previous rhizobial colonization. Acts from shoot to root to control AON. Interacts with CLE12 and CLE13 signaling to control nodule numbers. Required for the modulation of shoot-to-root auxin transport in response to altered nitrogen tissue concentrations and in the absence of rhizobia. Shoot-to-root auxin transport influences lateral root density and length. Involved in the regulation of root colonization by arbuscular mycorrhizal (AM) fungi. Interacts with CLE33 and CL53 signaling to repress strigolactone biosynthetic genes and strigolactone content in the roots, and consequently reduces the promotion of further colonization by AM fungi. In Medicago truncatula (Barrel medic), this protein is Leucine-rich repeat receptor-like kinase protein SUNN.